A 387-amino-acid polypeptide reads, in one-letter code: 4-hydroxy-3-methylbut-2-en-1-yl diphosphate synthase (flavodoxin) (387 aa).

Residues C293, C296, C328, and E335 each contribute to the [4Fe-4S] cluster site.

The protein belongs to the IspG family. It depends on [4Fe-4S] cluster as a cofactor.

The catalysed reaction is (2E)-4-hydroxy-3-methylbut-2-enyl diphosphate + oxidized [flavodoxin] + H2O + 2 H(+) = 2-C-methyl-D-erythritol 2,4-cyclic diphosphate + reduced [flavodoxin]. It functions in the pathway isoprenoid biosynthesis; isopentenyl diphosphate biosynthesis via DXP pathway; isopentenyl diphosphate from 1-deoxy-D-xylulose 5-phosphate: step 5/6. In terms of biological role, converts 2C-methyl-D-erythritol 2,4-cyclodiphosphate (ME-2,4cPP) into 1-hydroxy-2-methyl-2-(E)-butenyl 4-diphosphate. The polypeptide is 4-hydroxy-3-methylbut-2-en-1-yl diphosphate synthase (flavodoxin) (Treponema denticola (strain ATCC 35405 / DSM 14222 / CIP 103919 / JCM 8153 / KCTC 15104)).